We begin with the raw amino-acid sequence, 581 residues long: Arginine--tRNA ligase (581 aa).

The 'HIGH' region signature appears at 126–136 (PNLAKEMHVGH).

It belongs to the class-I aminoacyl-tRNA synthetase family. Monomer.

It localises to the cytoplasm. The enzyme catalyses tRNA(Arg) + L-arginine + ATP = L-arginyl-tRNA(Arg) + AMP + diphosphate. The polypeptide is Arginine--tRNA ligase (Shewanella sp. (strain MR-7)).